The primary structure comprises 667 residues: YTH domain-containing protein ECT2 (667 aa).

Disordered regions lie at residues 264-305 and 379-398; these read QRPV…PSSV and NELN…GNLD. Over residues 267-285 the composition is skewed to low complexity; sequence VSGSGVASSYSKSSTVPSS. Residues 286–305 show a composition bias toward polar residues; it reads RNQNYRSNSHYTSVHQPSSV. The YTH domain maps to 442-579; it reads AMFFIIKSYS…EQGLKIVKIF (138 aa). Residues 448 to 450, D454, 464 to 465, N497, W521, W526, and W534 contribute to the RNA site; these read KSY and WA. The disordered stretch occupies residues 606–667; that stretch reads KAKQTQKQVS…VTGDVVANGC (62 aa). Basic and acidic residues predominate over residues 614-627; that stretch reads VSEEKVTDEKKESA. Residues 628-639 show a composition bias toward low complexity; that stretch reads TAESASKESPAA.

In terms of assembly, interacts (via C-terminus) with CIPK1. In terms of tissue distribution, expressed in the shoot apex, at the sites of leaf formation, and in emerging leaves. Highly expressed in rapidly developing tissues.

The protein resides in the cytoplasm. The protein localises to the nucleus. In terms of biological role, specifically recognizes and binds N6-methyladenosine (m6A)-containing RNAs, and regulates mRNA stability. M6A is a modification present at internal sites of mRNAs and some non-coding RNAs and plays a role in mRNA stability and processing. Binds preferentially in the 3'UTRs of target genes. May play dual roles in regulating 3'UTR processing in the nucleus and facilitating mRNA stability in the cytoplasm. Required for the correct timing of leaf formation and normal leaf morphology. Functions redundantly with ECT3. Required for proper trichome branching and morphology. Controls trichome morphology by binding transcripts related to trichome morphogenesis and affecting their stability. The polypeptide is YTH domain-containing protein ECT2 (Arabidopsis thaliana (Mouse-ear cress)).